A 482-amino-acid chain; its full sequence is Zinc finger protein 385B (482 aa).

Positions 1–105 (MNMATFLRGF…TGSACHTTTL (105 aa)) are required for induction of apoptosis. 2 consecutive Matrin-type zinc fingers follow at residues 34–64 (SFCE…RVKQ) and 169–199 (ISCN…KVKA). Disordered stretches follow at residues 54–75 (DGKS…PPVQ), 189–259 (KGSK…SFLL), and 268–287 (LGAI…SVAE). Residues 106 to 482 (PALVRTPTLM…TPASILFAPY (377 aa)) form an interaction with p53/TP53 region. Residues 231-240 (SSDKSEDKGK) show a composition bias toward basic and acidic residues. Residues 294–328 (KKLLYCSLCKVAVNSLSQLEAHNTGSKHKTMVEAR) form a Matrin-type 3 zinc finger. Disordered stretches follow at residues 331 to 352 (AGPI…GSKG) and 378 to 397 (HISS…KPKY). The Matrin-type 4 zinc finger occupies 360–390 (FHCEICDVHVNSEIQLKQHISSRRHKDRVAG).

As to quaternary structure, interacts with p53/TP53; the interaction is direct.

The protein localises to the nucleus. Its function is as follows. May play a role in p53/TP53-mediated apoptosis. The sequence is that of Zinc finger protein 385B (Znf385b) from Mus musculus (Mouse).